Here is a 122-residue protein sequence, read N- to C-terminus: Large ribosomal subunit protein uL14c (122 aa).

It belongs to the universal ribosomal protein uL14 family. As to quaternary structure, part of the 50S ribosomal subunit.

It is found in the plastid. Its subcellular location is the chloroplast. Its function is as follows. Binds to 23S rRNA. The sequence is that of Large ribosomal subunit protein uL14c from Acorus calamus (Sweet flag).